Reading from the N-terminus, the 463-residue chain is L-seryl-tRNA(Sec) selenium transferase (463 aa).

At Lys-295 the chain carries N6-(pyridoxal phosphate)lysine.

This sequence belongs to the SelA family. As to quaternary structure, homodecamer; pentamer of dimers. Binds only one seryl-tRNA(Sec) per dimer. It depends on pyridoxal 5'-phosphate as a cofactor.

The protein resides in the cytoplasm. It catalyses the reaction L-seryl-tRNA(Sec) + selenophosphate + H(+) = L-selenocysteinyl-tRNA(Sec) + phosphate. It functions in the pathway aminoacyl-tRNA biosynthesis; selenocysteinyl-tRNA(Sec) biosynthesis; selenocysteinyl-tRNA(Sec) from L-seryl-tRNA(Sec) (bacterial route): step 1/1. Its function is as follows. Converts seryl-tRNA(Sec) to selenocysteinyl-tRNA(Sec) required for selenoprotein biosynthesis. The protein is L-seryl-tRNA(Sec) selenium transferase of Escherichia coli O139:H28 (strain E24377A / ETEC).